Reading from the N-terminus, the 123-residue chain is MLQGSSQHSGRDAESQALRHLQQHGLRLLAQNWLCKRGELDLVMLDGDTVVFVEVRYRKHTQWGGALGSIDGRKRQKLILAAQLFLQSESRWSSHPCRFDVVAIDGASGAEARLNWLRNAFDS.

This sequence belongs to the UPF0102 family.

The sequence is that of UPF0102 protein PFL_5073 from Pseudomonas fluorescens (strain ATCC BAA-477 / NRRL B-23932 / Pf-5).